Consider the following 462-residue polypeptide: Indoleacetamide hydrolase (462 aa).

Residues lysine 74 and serine 149 each act as charge relay system in the active site. Serine 173 acts as the Acyl-ester intermediate in catalysis.

It belongs to the amidase family.

It participates in plant hormone metabolism; auxin biosynthesis. In terms of biological role, hydrolyzes indole-3-acetamide (IAM) into indole-3-acetic acid (IAA). This Allorhizobium ampelinum (strain ATCC BAA-846 / DSM 112012 / S4) (Agrobacterium vitis (strain S4)) protein is Indoleacetamide hydrolase (iaaH).